The chain runs to 80 residues: Small ribosomal subunit protein uS17 (80 aa).

It belongs to the universal ribosomal protein uS17 family. In terms of assembly, part of the 30S ribosomal subunit.

In terms of biological role, one of the primary rRNA binding proteins, it binds specifically to the 5'-end of 16S ribosomal RNA. This Cereibacter sphaeroides (strain ATCC 17029 / ATH 2.4.9) (Rhodobacter sphaeroides) protein is Small ribosomal subunit protein uS17.